We begin with the raw amino-acid sequence, 517 residues long: Tyrosine-protein kinase Src42A (517 aa).

A disordered region spans residues 1–47 (MGNCLTTQKGEPDKPADRIKLDDPPTIGVGVGVPQIPMPSHAGQPPE). Residues 10–23 (GEPDKPADRIKLDD) show a composition bias toward basic and acidic residues. The region spanning 63–124 (ANAKIFVALY…PSNYVAKLKS (62 aa)) is the SH3 domain. The SH2 domain occupies 130 to 222 (WYFRKIKRIE…GLCVNLCKPC (93 aa)). The region spanning 248 to 504 (LKFVRKLGSG…TLQWKLEDFY (257 aa)) is the Protein kinase domain. ATP is bound by residues 254–262 (LGSGQFGDV) and lysine 276. Catalysis depends on aspartate 370, which acts as the Proton acceptor.

The protein belongs to the protein kinase superfamily. Tyr protein kinase family. SRC subfamily. As to expression, ubiquitous in early embryos, in stages 13-16 expression is seen in visceral mesoderm, hindgut, brain, anal pads and ventral ganglions. In larvae, expression is in CNS, wing disk, leg disk and photoreceptor precursors in the eye-antenna disks posterior to the morphogenetic furrow.

The enzyme catalyses L-tyrosyl-[protein] + ATP = O-phospho-L-tyrosyl-[protein] + ADP + H(+). Functionally, required directly or indirectly for the phosphorylation of drpr which is necessary for the interaction of drpr with shark and subsequent glial phagocytic activity. Together with drpr and shark, promotes the migration of macrophages to sites of wounding as part of a signaling cascade where Src42A detects production of hydrogen peroxide at wound sites which triggers phosphorylation of drpr and subsequent recruitment and activation of shark. Essential for correct eye morphogenesis (ommatidial R7 neuron formation) which requires the Ras1/MAPK signal transduction pathway. May be involved in the regulation of cytoskeleton organization and cell-cell contacts in developing ommatidia. Involved in phosphorylation of Dscam1, a cell surface receptor involved in targeting of growing axons during eye morphogenesis, and its interaction partner the SH2/SH3 adapter protein dock/dreadlocks. During embryogenesis, involved in regulation of dorsal closure where it may have a role in activating the JNK pathway in leading edge cells during this process. This is Tyrosine-protein kinase Src42A from Drosophila melanogaster (Fruit fly).